Here is a 300-residue protein sequence, read N- to C-terminus: Hairy/enhancer-of-split related with YRPW motif protein 1 (300 aa).

The interval 1 to 52 (MKRGHDYSSSDSELDENIEVEKESADENGNLSSAAGSMSPSTSSQILARKRR) is disordered. The segment covering 32–44 (SSAAGSMSPSTSS) has biased composition (low complexity). Positions 48–103 (ARKRRRGIIEKRRRDRINNSLSELRRLVPSAFEKQGSAKLEKAEILQMTVDHLKML) constitute a bHLH domain. The region spanning 121–157 (YRSLGFRECLAEVARYLSIIEGMDTTDPLRVRLVSHL) is the Orange domain. Low complexity predominate over residues 199-210 (AHTSANSTSSST). Disordered regions lie at residues 199–232 (AHTS…LRVP) and 278–300 (LSPT…IGAF). A YRPW motif motif is present at residues 290–293 (YRPW).

This sequence belongs to the HEY family. As to quaternary structure, efficient DNA binding requires dimerization with another bHLH protein. Binds DNA in the form of homodimer or more strongly as a heterodimer with hes1/hairy1 or hes4/hairy2b. Also weakly interacts with the bHLH proteins hes2, neurod1 and neurod4/ath3. Interacts (via Orange domain) with ccdc89/boip (via C-terminus).

Its subcellular location is the nucleus. Functionally, downstream effector of Notch signaling. Transcriptional repressor which binds preferentially to the canonical E box sequence 5'-CACGTG-3'. Acts as a suppressor of neurogenesis by antagonizing proneural gene function. Functions during floorplate development. Plays a role in pronephros formation in the inhibition of distal tubule and duct cell fates and the promotion of glomus and proximal tubule formation. The sequence is that of Hairy/enhancer-of-split related with YRPW motif protein 1 (hey1) from Xenopus tropicalis (Western clawed frog).